The chain runs to 213 residues: Phosphatidylserine decarboxylase proenzyme (213 aa).

The active-site Schiff-base intermediate with substrate; via pyruvic acid is Ser-183. Ser-183 carries the post-translational modification Pyruvic acid (Ser); by autocatalysis.

It belongs to the phosphatidylserine decarboxylase family. PSD-A subfamily. As to quaternary structure, heterodimer of a large membrane-associated beta subunit and a small pyruvoyl-containing alpha subunit. Pyruvate is required as a cofactor. Is synthesized initially as an inactive proenzyme. Formation of the active enzyme involves a self-maturation process in which the active site pyruvoyl group is generated from an internal serine residue via an autocatalytic post-translational modification. Two non-identical subunits are generated from the proenzyme in this reaction, and the pyruvate is formed at the N-terminus of the alpha chain, which is derived from the carboxyl end of the proenzyme. The post-translation cleavage follows an unusual pathway, termed non-hydrolytic serinolysis, in which the side chain hydroxyl group of the serine supplies its oxygen atom to form the C-terminus of the beta chain, while the remainder of the serine residue undergoes an oxidative deamination to produce ammonia and the pyruvoyl prosthetic group on the alpha chain.

The protein localises to the cell membrane. It carries out the reaction a 1,2-diacyl-sn-glycero-3-phospho-L-serine + H(+) = a 1,2-diacyl-sn-glycero-3-phosphoethanolamine + CO2. It functions in the pathway phospholipid metabolism; phosphatidylethanolamine biosynthesis; phosphatidylethanolamine from CDP-diacylglycerol: step 2/2. Catalyzes the formation of phosphatidylethanolamine (PtdEtn) from phosphatidylserine (PtdSer). The protein is Phosphatidylserine decarboxylase proenzyme of Syntrophus aciditrophicus (strain SB).